The sequence spans 464 residues: MLKVFNTLTRRLEDFKPLEPPLVRMYVCGPTVYDHSHIGHARTWVAFDIIKKYLRLKGYNVIHVQNITDIDDKIINRARELGVSWKEVADTYTNEYFELMKKLKVFPTVHPRVTDHIDDIIEFVQDLVDKGYAYVTQSGVYFDVDKYPYYGQLSGIKDKKMWSQEEFVKDKKNPYDFALWKCAKPGEPWWDSPWCKGRPGWHIECSTMSSKYLGKQFDVHGGARDLIFPHHENEIAQSEARFGVRPWVKYWLHSGYLTVKGEKMSKSLGNIVPLKDVLKSFEPEVVRYWLSSAHYRTELDFSWERLEEAKRSLTRMRMTVDELRKIVKKESPKGKLDEWEIKAIYEVSKIRNEFYDAMDNDFNTPEAWAAVREALRLGNKAIEEGSWEVSLAVLEFVNEADKVFEVFEERVHEGVEPFIDLLVEVRSKLREMKQWELADYIRSKLDELGVKLLDKGKETEWRFA.

Zn(2+) is bound at residue Cys-28. Positions 30-40 (PTVYDHSHIGH) match the 'HIGH' region motif. The Zn(2+) site is built by Cys-205, His-230, and Glu-234. A 'KMSKS' region motif is present at residues 263-267 (KMSKS). Lys-266 is a binding site for ATP.

The protein belongs to the class-I aminoacyl-tRNA synthetase family. Requires Zn(2+) as cofactor.

It is found in the cytoplasm. The catalysed reaction is tRNA(Cys) + L-cysteine + ATP = L-cysteinyl-tRNA(Cys) + AMP + diphosphate. In Ignicoccus hospitalis (strain KIN4/I / DSM 18386 / JCM 14125), this protein is Cysteine--tRNA ligase.